The following is a 123-amino-acid chain: Class I hydrophobin pri2 (123 aa).

The signal sequence occupies residues 1–18; sequence MVAIKSLAILALPVMAMA. Cystine bridges form between Cys31/Cys102, Cys38/Cys96, Cys39/Cys84, and Cys103/Cys116. Residues Asn33 and Asn40 are each glycosylated (N-linked (GlcNAc...) asparagine).

The protein belongs to the fungal hydrophobin family. Self-assembles to form functional amyloid fibrils called rodlets. Self-assembly into fibrillar rodlets occurs spontaneously at hydrophobic:hydrophilic interfaces and the rodlets further associate laterally to form amphipathic monolayers.

Its subcellular location is the secreted. It is found in the cell wall. Functionally, aerial growth, conidiation, and dispersal of filamentous fungi in the environment rely upon a capability of their secreting small amphipathic proteins called hydrophobins (HPBs) with low sequence identity. Class I can self-assemble into an outermost layer of rodlet bundles on aerial cell surfaces, conferring cellular hydrophobicity that supports fungal growth, development and dispersal; whereas Class II form highly ordered films at water-air interfaces through intermolecular interactions but contribute nothing to the rodlet structure. The sequence is that of Class I hydrophobin pri2 from Cyclocybe aegerita (Black poplar mushroom).